A 134-amino-acid polypeptide reads, in one-letter code: Small ribosomal subunit protein uS11 (134 aa).

This sequence belongs to the universal ribosomal protein uS11 family. As to quaternary structure, part of the 30S ribosomal subunit. Interacts with proteins S7 and S18. Binds to IF-3.

Its function is as follows. Located on the platform of the 30S subunit, it bridges several disparate RNA helices of the 16S rRNA. Forms part of the Shine-Dalgarno cleft in the 70S ribosome. This is Small ribosomal subunit protein uS11 from Frankia alni (strain DSM 45986 / CECT 9034 / ACN14a).